A 310-amino-acid chain; its full sequence is ATP-dependent protease (310 aa).

An Integrase catalytic domain is found at arginine 24–phenylalanine 186.

In Lactococcus lactis subsp. lactis (Streptococcus lactis), this protein is ATP-dependent protease.